Reading from the N-terminus, the 241-residue chain is Venom nerve growth factor (241 aa).

An N-terminal signal peptide occupies residues Met-1–Ala-18. Positions Ala-19–Arg-122 are excised as a propeptide. 3 disulfides stabilise this stretch: Cys-136–Cys-201, Cys-179–Cys-229, and Cys-189–Cys-231. N-linked (GlcNAc...) asparagine glycosylation is present at Asn-145.

It belongs to the NGF-beta family. As to quaternary structure, homodimer; non-covalently linked. In terms of tissue distribution, expressed by the venom gland.

The protein resides in the secreted. Its function is as follows. Nerve growth factor is important for the development and maintenance of the sympathetic and sensory nervous systems. It stimulates division and differentiation of sympathetic and embryonic sensory neurons as well as basal forebrain cholinergic neurons in the brain. Its relevance in the snake venom is not clear. However, it has been shown to inhibit metalloproteinase-dependent proteolysis of platelet glycoprotein Ib alpha, suggesting a metalloproteinase inhibition to prevent metalloprotease autodigestion and/or protection against prey proteases. Binds a lipid between the two protein chains in the homodimer. The lipid-bound form promotes histamine relase from mouse mast cells, contrary to the lipid-free form. The sequence is that of Venom nerve growth factor from Crotalus durissus terrificus (South American rattlesnake).